Consider the following 382-residue polypeptide: Mannitol-1-phosphate 5-dehydrogenase (382 aa).

Position 4–15 (4–15 (AVHFGAGNIGRG)) interacts with NAD(+).

It belongs to the mannitol dehydrogenase family. Monomer.

The enzyme catalyses D-mannitol 1-phosphate + NAD(+) = beta-D-fructose 6-phosphate + NADH + H(+). The protein is Mannitol-1-phosphate 5-dehydrogenase (mtlD) of Streptococcus mutans serotype c (strain ATCC 700610 / UA159).